The sequence spans 213 residues: Thiopurine S-methyltransferase (213 aa).

4 residues coordinate S-adenosyl-L-methionine: Trp-10, Leu-46, Glu-67, and Arg-124.

Belongs to the class I-like SAM-binding methyltransferase superfamily. TPMT family.

The protein resides in the cytoplasm. It carries out the reaction S-adenosyl-L-methionine + a thiopurine = S-adenosyl-L-homocysteine + a thiopurine S-methylether.. The sequence is that of Thiopurine S-methyltransferase from Xanthobacter autotrophicus (strain ATCC BAA-1158 / Py2).